A 94-amino-acid polypeptide reads, in one-letter code: Transcription factor CPC (94 aa).

Positions 1–10 (MFRSDKAEKM) are S1, required for cell-to-cell movements. A compositionally biased stretch (basic and acidic residues) spans 1–11 (MFRSDKAEKMD). Residues 1–25 (MFRSDKAEKMDKRRRRQSKAKASCS) are disordered. Residues 30–80 (SIEWEAVKMSEEEEDLISRMYKLVGDRWELIAGRIPGRTPEEIERYWLMKH) form the Myb-like domain. Positions 76 to 79 (WLMK) are S2, required for cell-to-cell movements and nuclear localization.

In terms of assembly, interacts with GL3 and BHLH2. Interacts with SIEL. As to expression, expressed in trichomes and in young developing leaves, as well as in root hair and stele cells (pericycle and vascular tissues). Expressed in epidermal root hairless cells (atrichoblasts) and moves to root hair cells (trichoblasts) by a cell-to-cell movement through plasmodesmata (at protein level).

The protein resides in the nucleus. In terms of biological role, transcription factor. Determines the fate of epidermal cell differentiation. Represses trichome development by lateral inhibition. Together with GL3 or BHLH2, promotes the formation of hair developing cells (H position) in root epidermis, probably by inhibiting non-hair cell formation. Represses the expression of GL2 and WER in H cells. Positively regulates stomatal formation in the hypocotyl. The sequence is that of Transcription factor CPC (CPC) from Arabidopsis thaliana (Mouse-ear cress).